The primary structure comprises 464 residues: MRCSPKRSLTAVIAASFLLLLLLLLLHRGSWQDPQEVQFRDLPSDAVLKILKQGSLHILQDTDNLCALHNISYHLLAGSPLPHKKFLAVGLSSVRRPRGYYLPDTLQSLFKQSSEEELQEMVVVVHLADADPIWNAQVAADISHRFAHHILLGRLVLIHTPHEFYPTLEGLKRNYNDPEERVKFRSKQNVDYAFLFTFAANLSSYYLMIEDDVWSAKSFFTAIRKAVASQEGSNWATLEFSKLGYIGKLYRSSDLPRLARFLLLFYQEMPCDWLLTHFRLLLTQKDVIRFKPSLFQHMGLYSSFQGTVNRLEDDEFQADAMDLPDNPPAALFTNMVVFENYEPSKAYSTARGYFWGKNPAVGSIFSIVFHQPARVTRVRVQTGSSERPGDFLHAGVLELGRGRRADGRDCSVYTTVGTFEKGNLEWRGLEKGMPNPVECVRIRVTQSQSEWLIIQSIGIWTAGT.

Topologically, residues 1-10 (MRCSPKRSLT) are cytoplasmic. Residues 11–31 (AVIAASFLLLLLLLLLHRGSW) form a helical; Signal-anchor for type II membrane protein membrane-spanning segment. Topologically, residues 32–464 (QDPQEVQFRD…QSIGIWTAGT (433 aa)) are lumenal. 2 N-linked (GlcNAc...) asparagine glycosylation sites follow: asparagine 70 and asparagine 201.

The protein belongs to the glycosyltransferase 54 family. It depends on a divalent metal cation as a cofactor. In terms of tissue distribution, highly expressed in oviduct, spleen, lung and colon.

It is found in the golgi apparatus membrane. It carries out the reaction N(4)-{beta-D-GlcNAc-(1-&gt;2)-[beta-D-GlcNAc-(1-&gt;4)]-alpha-D-Man-(1-&gt;3)-[beta-D-GlcNAc-(1-&gt;2)-[beta-D-GlcNAc-(1-&gt;6)]-alpha-D-Man-(1-&gt;6)]-beta-D-Man-(1-&gt;4)-beta-D-GlcNAc-(1-&gt;4)-beta-D-GlcNAc}-L-asparaginyl-[protein] + UDP-N-acetyl-alpha-D-glucosamine = N(4)-{beta-D-GlcNAc-(1-&gt;2)-[beta-D-GlcNAc-(1-&gt;4)]-alpha-D-Man-(1-&gt;3)-[beta-D-GlcNAc-(1-&gt;2)-[beta-D-GlcNAc-(1-&gt;4)]-[beta-D-GlcNAc-(1-&gt;6)]-alpha-D-Man-(1-&gt;6)]-beta-D-Man-(1-&gt;4)-beta-D-GlcNAc-(1-&gt;4)-beta-D-GlcNAc}-L-asparaginyl-[protein] + UDP + H(+). It participates in protein modification; protein glycosylation. Its function is as follows. Glycosyltransferase that catalyzes the transfer of GlcNAc to the Manalpha1-6 arm to form GlcNAcBeta1-4Manalpha1-6 linkage (also named 'GnT-VI' activity). May also participate in the transfer of N-acetylglucosamine (GlcNAc) to the core mannose residues of N-linked glycans by catalyzing the formation of the GlcNAcbeta1-4 branch on the GlcNAcbeta1-2Manalpha1-3 arm of the core structure of N-linked glycans. The protein is Alpha-1,6-mannosyl-glycoprotein 4-beta-N-acetylglucosaminyltransferase (MGAT4C) of Gallus gallus (Chicken).